Consider the following 970-residue polypeptide: Sodium/calcium exchanger 1 (970 aa).

The N-terminal stretch at 1–32 (MLRLSLPPNVSMGFRLVALVALLFSHVDHITA) is a signal peptide. The Extracellular portion of the chain corresponds to 33-71 (DTEAETGGNETTECTGSYYCKKGVILPIWEPQDPSFGDK). Residue N41 is glycosylated (N-linked (GlcNAc...) asparagine). A helical transmembrane segment spans residues 72–92 (IARATVYFVAMVYMFLGVSII). Topologically, residues 93 to 133 (ADRFMSSIEVITSQEKEITIKKPNGETTKTTVRIWNETVSN) are cytoplasmic. Residues 134-154 (LTLMALGSSAPEILLSVIEVC) traverse the membrane as a helical segment. The Alpha-1 repeat unit spans residues 138–178 (ALGSSAPEILLSVIEVCGHNFTAGDLGPSTIVGSAAFNMFI). Residues 155–167 (GHNFTAGDLGPST) lie on the Extracellular side of the membrane. An N-linked (GlcNAc...) asparagine glycan is attached at N157. A helical membrane pass occupies residues 168–188 (IVGSAAFNMFIIIALCVYVVP). The Cytoplasmic segment spans residues 189-201 (DGETRKIKHLRVF). Residues 202–222 (FVTAAWSIFAYTWLYIILSVS) form a helical membrane-spanning segment. The Extracellular segment spans residues 223 to 228 (SPGVVE). A helical membrane pass occupies residues 229–249 (VWEGLLTFFFFPICVVFAWVA). Residues 250 to 797 (DRRLLFYKYV…FVPPTEYWNG (548 aa)) are Cytoplasmic-facing. The interval 251–270 (RRLLFYKYVYKRYRAGKQRG) is putative calmodulin-binding region. Phosphoserine occurs at positions 282 and 389. Calx-beta domains are found at residues 393–493 (VNME…VHLS) and 524–624 (ATIT…IEIG). Residues E417, D453, D478, D479, I481, E483, E486, D530, D531, D532, E548, D584, D610, E611, E612, and E715 each coordinate Ca(2+). The helical transmembrane segment at 798–818 (WACFIVSILMIGLLTAFIGDL) threads the bilayer. At 819–821 (ASH) the chain is on the extracellular side. A helical membrane pass occupies residues 822–842 (FGCTIGLKDSVTAVVFVALGT). An Alpha-2 repeat occupies 839–875 (ALGTSVPDTFASKVAATQDQYADASIGNVTGSNAVNV). Over 843–871 (SVPDTFASKVAATQDQYADASIGNVTGSN) the chain is Cytoplasmic. A helical membrane pass occupies residues 872 to 892 (AVNVFLGIGVAWSIAAIYHAA). Topologically, residues 893–903 (NGEQFKVSPGT) are extracellular. The helical transmembrane segment at 904–924 (LAFSVTLFTIFAFINVGVLLY) threads the bilayer. Residues 925–941 (RRRPEIGGELGGPRTAK) lie on the Cytoplasmic side of the membrane. The helical transmembrane segment at 942-962 (LLTSSLFVLLWLLYIFFSSLE) threads the bilayer. The Extracellular segment spans residues 963–970 (AYCHIKGF).

The protein belongs to the Ca(2+):cation antiporter (CaCA) (TC 2.A.19) family. SLC8 subfamily. Detected in heart, kidney and brain (at protein level).

Its subcellular location is the cell membrane. The enzyme catalyses Ca(2+)(in) + 3 Na(+)(out) = Ca(2+)(out) + 3 Na(+)(in). Its activity is regulated as follows. Activated by micromolar levels of Ca(2+). Mediates the exchange of one Ca(2+) ion against three to four Na(+) ions across the cell membrane, and thereby contributes to the regulation of cytoplasmic Ca(2+) levels and Ca(2+)-dependent cellular processes. Contributes to Ca(2+) transport during excitation-contraction coupling in muscle. In a first phase, voltage-gated channels mediate the rapid increase of cytoplasmic Ca(2+) levels due to release of Ca(2+) stores from the endoplasmic reticulum. SLC8A1 mediates the export of Ca(2+) from the cell during the next phase, so that cytoplasmic Ca(2+) levels rapidly return to baseline. Required for normal embryonic heart development and the onset of heart contractions. This chain is Sodium/calcium exchanger 1 (Slc8a1), found in Mus musculus (Mouse).